The sequence spans 288 residues: Quinate/shikimate dehydrogenase (288 aa).

Residues Lys71 and Asp107 each contribute to the substrate site. NAD(+)-binding positions include 132-135 (AGGA), 155-158 (NRRD), Lys205, 232-235 (CVYN), and Gly255.

This sequence belongs to the shikimate dehydrogenase family. Homodimer.

It carries out the reaction L-quinate + NAD(+) = 3-dehydroquinate + NADH + H(+). The catalysed reaction is L-quinate + NADP(+) = 3-dehydroquinate + NADPH + H(+). The enzyme catalyses shikimate + NADP(+) = 3-dehydroshikimate + NADPH + H(+). It catalyses the reaction shikimate + NAD(+) = 3-dehydroshikimate + NADH + H(+). It participates in metabolic intermediate biosynthesis; chorismate biosynthesis; chorismate from D-erythrose 4-phosphate and phosphoenolpyruvate: step 4/7. Its function is as follows. The actual biological function of YdiB remains unclear, nor is it known whether 3-dehydroshikimate or quinate represents the natural substrate. Catalyzes the reversible NAD-dependent reduction of both 3-dehydroshikimate (DHSA) and 3-dehydroquinate to yield shikimate (SA) and quinate, respectively. It can use both NAD or NADP for catalysis, however it has higher catalytic efficiency with NAD. In Escherichia coli O17:K52:H18 (strain UMN026 / ExPEC), this protein is Quinate/shikimate dehydrogenase.